Consider the following 660-residue polypeptide: Arginine--tRNA ligase, cytoplasmic (660 aa).

The tract at residues Met-1 to Ser-72 is could be involved in the assembly of the multisynthetase complex. L-arginine contacts are provided by residues Ser-200 to Asn-202, His-211, Tyr-384, Asp-388, and Gln-412. A 'HIGH' region motif is present at residues Pro-201 to Leu-212. Residues Asn-529 to Ser-543 form an interaction with tRNA region.

The protein belongs to the class-I aminoacyl-tRNA synthetase family. In terms of assembly, monomer; also part of a multisubunit complex that groups tRNA ligases for Arg, Asp, Glu, Gln, Ile, Leu, Lys, Met and Pro.

It localises to the cytoplasm. Its subcellular location is the cytosol. The enzyme catalyses tRNA(Arg) + L-arginine + ATP = L-arginyl-tRNA(Arg) + AMP + diphosphate. Forms part of a macromolecular complex that catalyzes the attachment of specific amino acids to cognate tRNAs during protein synthesis. This chain is Arginine--tRNA ligase, cytoplasmic (rars1), found in Xenopus tropicalis (Western clawed frog).